Here is a 182-residue protein sequence, read N- to C-terminus: FDRYNQILDEHNMNLREAEQILRYLKVKSVKDEETKKIKQEEAEMKKKIEGEASRKKLELEQRRTEQQPSGDANDMFGSTDDLMNLDLDNFRTDFLDFGETSERPQNDDMMKDIFEMKTADNSEGSAMDSLTDLNLDFLDQPAQAGPEPAAPAQEDDAGLMPTDQMENLFSQFDELVNSGDY.

The stretch at 1–68 (FDRYNQILDE…ELEQRRTEQQ (68 aa)) forms a coiled coil. Residues 32 to 66 (DEETKKIKQEEAEMKKKIEGEASRKKLELEQRRTE) are compositionally biased toward basic and acidic residues. Disordered regions lie at residues 32–81 (DEET…GSTD) and 140–160 (DQPA…DAGL). A compositionally biased stretch (low complexity) spans 140–153 (DQPAQAGPEPAAPA).

It is found in the cytoplasm. It localises to the cytoskeleton. This Pichia angusta (Yeast) protein is Tropomyosin-like protein.